The sequence spans 113 residues: Protein USP2 (113 aa).

The N-terminal stretch at 1 to 18 is a signal peptide; the sequence is MKITMFFAALSAASGVFA. 6 repeat units span residues 32–37, 40–45, 46–49, 50–53, 59–65, and 69–75. The interval 32–45 is 2 X 6 AA repeats; that stretch reads IGAGVGIGIGAGVG. Residues 46-53 are 2 X 4 AA approximate tandem repeats; that stretch reads SYGYPYGA. The segment at 59–75 is 2 X 7 AA approximate repeats; that stretch reads LQLLPLRWLPLRRLPLR.

Its subcellular location is the secreted. This chain is Protein USP2 (USP2), found in Puccinia graminis (Black stem rust fungus).